A 186-amino-acid chain; its full sequence is uncharacterized protein (186 aa).

Residues 121-146 (TSPLLKKNKPSSDQDDTSKQSFDQDE) are disordered.

Belongs to the chlamydial CPn_0422/CT_273/TC_0545 family.

This is an uncharacterized protein from Chlamydia muridarum (strain MoPn / Nigg).